The chain runs to 460 residues: Chromosomal replication initiator protein DnaA (460 aa).

Residues 1–84 (MAVSLWQQCI…RFDIGSRPSA (84 aa)) are domain I, interacts with DnaA modulators. The tract at residues 84-123 (AKKPEPAPVAAVRVPNPQTKASVGTSFNTTEPVANTNHRS) is domain II. The tract at residues 103–123 (KASVGTSFNTTEPVANTNHRS) is disordered. Positions 124–340 (NINPTYQFDN…GALNRVIANA (217 aa)) are domain III, AAA+ region. ATP contacts are provided by glycine 168, glycine 170, lysine 171, and threonine 172. The interval 341–460 (NFTGRPITID…YANLIRTLSS (120 aa)) is domain IV, binds dsDNA.

This sequence belongs to the DnaA family. As to quaternary structure, oligomerizes as a right-handed, spiral filament on DNA at oriC.

It localises to the cytoplasm. In terms of biological role, plays an essential role in the initiation and regulation of chromosomal replication. ATP-DnaA binds to the origin of replication (oriC) to initiate formation of the DNA replication initiation complex once per cell cycle. Binds the DnaA box (a 9 base pair repeat at the origin) and separates the double-stranded (ds)DNA. Forms a right-handed helical filament on oriC DNA; dsDNA binds to the exterior of the filament while single-stranded (ss)DNA is stabiized in the filament's interior. The ATP-DnaA-oriC complex binds and stabilizes one strand of the AT-rich DNA unwinding element (DUE), permitting loading of DNA polymerase. After initiation quickly degrades to an ADP-DnaA complex that is not apt for DNA replication. Binds acidic phospholipids. The polypeptide is Chromosomal replication initiator protein DnaA (Shewanella sp. (strain MR-4)).